A 559-amino-acid polypeptide reads, in one-letter code: Dihydroxy-acid dehydratase (559 aa).

Mg(2+) is bound at residue Asp78. Cys119 is a [2Fe-2S] cluster binding site. The Mg(2+) site is built by Asp120 and Lys121. Position 121 is an N6-carboxylysine (Lys121). Position 191 (Cys191) interacts with [2Fe-2S] cluster. Glu442 contacts Mg(2+). Catalysis depends on Ser468, which acts as the Proton acceptor.

Belongs to the IlvD/Edd family. In terms of assembly, homodimer. It depends on [2Fe-2S] cluster as a cofactor. Requires Mg(2+) as cofactor.

The catalysed reaction is (2R)-2,3-dihydroxy-3-methylbutanoate = 3-methyl-2-oxobutanoate + H2O. It catalyses the reaction (2R,3R)-2,3-dihydroxy-3-methylpentanoate = (S)-3-methyl-2-oxopentanoate + H2O. It functions in the pathway amino-acid biosynthesis; L-isoleucine biosynthesis; L-isoleucine from 2-oxobutanoate: step 3/4. The protein operates within amino-acid biosynthesis; L-valine biosynthesis; L-valine from pyruvate: step 3/4. In terms of biological role, functions in the biosynthesis of branched-chain amino acids. Catalyzes the dehydration of (2R,3R)-2,3-dihydroxy-3-methylpentanoate (2,3-dihydroxy-3-methylvalerate) into 2-oxo-3-methylpentanoate (2-oxo-3-methylvalerate) and of (2R)-2,3-dihydroxy-3-methylbutanoate (2,3-dihydroxyisovalerate) into 2-oxo-3-methylbutanoate (2-oxoisovalerate), the penultimate precursor to L-isoleucine and L-valine, respectively. The chain is Dihydroxy-acid dehydratase from Agathobacter rectalis (strain ATCC 33656 / DSM 3377 / JCM 17463 / KCTC 5835 / VPI 0990) (Eubacterium rectale).